The chain runs to 140 residues: Acyl-coenzyme A thioesterase 13 (140 aa).

At Met-1 the chain carries N-acetylmethionine. An N-acetylthreonine; in Acyl-coenzyme A thioesterase 13, N-terminally processed modification is found at Thr-2. Lys-27, Lys-37, and Lys-43 each carry N6-acetyllysine. Glu-46 contributes to the CoA binding site. Positions 50 and 81 each coordinate substrate. Residues Ser-83, 90 to 95, and 108 to 113 contribute to the CoA site; these read YMSPAK and KQGKTL. Lys-108 and Lys-127 each carry N6-acetyllysine. CoA is bound at residue His-137.

Belongs to the thioesterase PaaI family. In terms of assembly, homotetramer. Interacts with PCTP.

The protein localises to the cytoplasm. The protein resides in the cytosol. Its subcellular location is the mitochondrion. It is found in the nucleus. It localises to the cytoskeleton. The protein localises to the spindle. It carries out the reaction a fatty acyl-CoA + H2O = a fatty acid + CoA + H(+). The catalysed reaction is decanoyl-CoA + H2O = decanoate + CoA + H(+). The enzyme catalyses octanoyl-CoA + H2O = octanoate + CoA + H(+). It catalyses the reaction butanoyl-CoA + H2O = butanoate + CoA + H(+). It carries out the reaction hexanoyl-CoA + H2O = hexanoate + CoA + H(+). The catalysed reaction is tetradecanoyl-CoA + H2O = tetradecanoate + CoA + H(+). The enzyme catalyses hexadecanoyl-CoA + H2O = hexadecanoate + CoA + H(+). It catalyses the reaction dodecanoyl-CoA + H2O = dodecanoate + CoA + H(+). It carries out the reaction (9Z)-octadecenoyl-CoA + H2O = (9Z)-octadecenoate + CoA + H(+). The catalysed reaction is (5Z,8Z,11Z,14Z)-eicosatetraenoyl-CoA + H2O = (5Z,8Z,11Z,14Z)-eicosatetraenoate + CoA + H(+). In terms of biological role, catalyzes the hydrolysis of acyl-CoAs into free fatty acids and coenzyme A (CoASH), regulating their respective intracellular levels. Has acyl-CoA thioesterase activity towards medium (C12) and long-chain (C18) fatty acyl-CoA substrates. Can also hydrolyze 3-hydroxyphenylacetyl-CoA and 3,4-dihydroxyphenylacetyl-CoA (in vitro). May play a role in controlling adaptive thermogenesis. This is Acyl-coenzyme A thioesterase 13 from Homo sapiens (Human).